The primary structure comprises 235 residues: Thiamine import ATP-binding protein ThiQ (235 aa).

The region spanning 2–230 (LKLIDITWLY…QASASALLGI (229 aa)) is the ABC transporter domain. 32 to 39 (GPSGAGKS) serves as a coordination point for ATP.

The protein belongs to the ABC transporter superfamily. Thiamine importer (TC 3.A.1.19.1) family. As to quaternary structure, the complex is composed of two ATP-binding proteins (ThiQ), two transmembrane proteins (ThiP) and a solute-binding protein (ThiB).

Its subcellular location is the cell inner membrane. The catalysed reaction is thiamine(out) + ATP + H2O = thiamine(in) + ADP + phosphate + H(+). Functionally, part of the ABC transporter complex ThiBPQ involved in thiamine import. Responsible for energy coupling to the transport system. This Salmonella paratyphi A (strain ATCC 9150 / SARB42) protein is Thiamine import ATP-binding protein ThiQ.